We begin with the raw amino-acid sequence, 310 residues long: MFHHVTVLLEETVDQLNIDPNGIYVDCTLGGAGHSLYLVKQLQEGHLISIDQDQTAIDNAHIILKDYLDKVTFVKDNFRNLSDILAHLDIQKVDGILYDLGVSSPQLDVGERGFSYHQEAKLDMRMDQTQTLSAYEVVNTWPYEKLVSIFFRYGEEKFSKQIARKIEAERELKPIETTTELVEIIKAAIPAPARRTGGHPAKRVFQAIRIAVNDELGAFESSIEQAIDSVKPGGRISVITFHSLEDRLCKQVFQEYSKGPDIPRGLPVVPPEYQPKLKKITRKPITSSNEELEHNNRARSAKLRVVEILK.

S-adenosyl-L-methionine is bound by residues 32–34 (AGH), D51, F78, D99, and Q106.

The protein belongs to the methyltransferase superfamily. RsmH family.

It localises to the cytoplasm. The enzyme catalyses cytidine(1402) in 16S rRNA + S-adenosyl-L-methionine = N(4)-methylcytidine(1402) in 16S rRNA + S-adenosyl-L-homocysteine + H(+). In terms of biological role, specifically methylates the N4 position of cytidine in position 1402 (C1402) of 16S rRNA. The polypeptide is Ribosomal RNA small subunit methyltransferase H (Macrococcus caseolyticus (strain JCSC5402) (Macrococcoides caseolyticum)).